A 501-amino-acid chain; its full sequence is Probable pectate lyase 13 (501 aa).

Positions 1–22 are cleaved as a signal peptide; the sequence is MLLQNFSNTIFLLCLFFTLLSA. Asparagine 27 and asparagine 49 each carry an N-linked (GlcNAc...) asparagine glycan. The interval 55 to 78 is disordered; that stretch reads RQLSSPSSSSSSSSSSSSSSCRTG. Positions 58-74 are enriched in low complexity; that stretch reads SSPSSSSSSSSSSSSSS. Positions 217, 241, and 245 each coordinate Ca(2+). The active site involves arginine 297. Disordered stretches follow at residues 329–359 and 408–463; these read INSQ…DGEW and NAGV…SSGD. Over residues 343-357 the composition is skewed to basic and acidic residues; that stretch reads SAKEVTKRVDSKDDG. The span at 430–449 shows a compositional bias: gly residues; the sequence is GGDGGGGGSSGGSSGGGMDV. The segment covering 450–463 has biased composition (low complexity); sequence MGGTTRGSSSSSGD. Serine 474 carries the GPI-anchor amidated serine lipid modification. The propeptide at 475 to 501 is removed in mature form; that stretch reads DAPSRPRLTLLFSLLMISVLSLSTLLL.

This sequence belongs to the polysaccharide lyase 1 family. Ca(2+) serves as cofactor. Expressed equally in mature leaves, buds, flowers, rosettes and roots.

It is found in the cell membrane. It catalyses the reaction Eliminative cleavage of (1-&gt;4)-alpha-D-galacturonan to give oligosaccharides with 4-deoxy-alpha-D-galact-4-enuronosyl groups at their non-reducing ends.. It functions in the pathway glycan metabolism; pectin degradation; 2-dehydro-3-deoxy-D-gluconate from pectin: step 2/5. Susceptibility factor required for infection by most powdery mildews, but not by unrelated pathogens. Exact function not known, but clearly affects cell wall composition. The polypeptide is Probable pectate lyase 13 (PMR6) (Arabidopsis thaliana (Mouse-ear cress)).